The primary structure comprises 989 residues: Protease PrtH (989 aa).

Repeats lie at residues 270 to 323 and 528 to 581; these read TPTD…KCVN and SPAS…VCVD. Positions 969–989 are disordered; that stretch reads PRDTPWRYGKRELPPSASGMR.

This sequence belongs to the peptidase C25 family.

It is found in the cytoplasmic vesicle. Cleaves human complement component C3. May enable P.gingivalis to evade complement-mediated killing during the immune response. Plays an important role in soft tissue infections and is a virulence factor. This is Protease PrtH (prtH) from Porphyromonas gingivalis (strain ATCC BAA-308 / W83).